The primary structure comprises 400 residues: Selection and upkeep of intraepithelial T-cells protein 2 (400 aa).

The N-terminal stretch at 1 to 21 is a signal peptide; the sequence is MGATGVLLCVVLHFLQMVTQS. The Extracellular portion of the chain corresponds to 22–240; the sequence is SEKFTVTGLQ…LSGELFSWKR (219 aa). Residues 23–133 enclose the Ig-like V-type domain; that stretch reads EKFTVTGLQR…VGEFYEEHIT (111 aa). Disulfide bonds link C46–C120 and C160–C214. The region spanning 139 to 225 is the Ig-like C1-type domain; the sequence is ATSSVMYILM…LQNLLTHQEE (87 aa). An N-linked (GlcNAc...) asparagine glycan is attached at N197. The chain crosses the membrane as a helical span at residues 241-261; it reads VWIMILTTIGFMMIAFCMTYC. Topologically, residues 262–280 are cytoplasmic; that stretch reads VQQHLLYGTFSKGKCHWLK. Residues 281 to 301 traverse the membrane as a helical segment; the sequence is STMIFMFSVIAVTGVMLILHL. Topologically, residues 302 to 321 are extracellular; it reads KQRVPVSDQHFELDTLWLED. The chain crosses the membrane as a helical span at residues 322–342; sequence ISVILCVLIVFIIKLISFIYF. Topologically, residues 343-400 are cytoplasmic; that stretch reads RLEGDHQGWSLPPYLSATPTAAICRLAVPEYSRGHLQLDSEDDLAGMGPSPFFITPCF.

Belongs to the SKINT family. In terms of tissue distribution, expressed in skin, thymus and mammary gland.

It localises to the membrane. Its function is as follows. May act by engaging a cell surface molecule on immature T-cells in the embryonic thymus. This Mus musculus (Mouse) protein is Selection and upkeep of intraepithelial T-cells protein 2 (Skint2).